The chain runs to 398 residues: Elongation factor Tu (398 aa).

A tr-type G domain is found at 10–207 (KPHVNIGTIG…TVDEYIPEPE (198 aa)). Positions 19-26 (GHVDHGKT) are G1. 19 to 26 (GHVDHGKT) lines the GTP pocket. Thr-26 is a Mg(2+) binding site. The segment at 63–67 (GITIN) is G2. The segment at 84-87 (DAPG) is G3. Residues 84–88 (DAPGH) and 139–142 (NKVD) each bind GTP. Residues 139–142 (NKVD) form a G4 region. The interval 177–179 (SAL) is G5.

The protein belongs to the TRAFAC class translation factor GTPase superfamily. Classic translation factor GTPase family. EF-Tu/EF-1A subfamily. Monomer.

It localises to the cytoplasm. It carries out the reaction GTP + H2O = GDP + phosphate + H(+). In terms of biological role, GTP hydrolase that promotes the GTP-dependent binding of aminoacyl-tRNA to the A-site of ribosomes during protein biosynthesis. The protein is Elongation factor Tu of Streptococcus thermophilus (strain CNRZ 1066).